We begin with the raw amino-acid sequence, 370 residues long: Translocating chain-associated membrane protein 2 (370 aa).

The Cytoplasmic segment spans residues methionine 1–histidine 22. Residues alanine 23 to alanine 43 traverse the membrane as a helical segment. At lysine 44 to leucine 75 the chain is on the extracellular side. An N-linked (GlcNAc...) asparagine glycan is attached at asparagine 55. Residues valine 76–isoleucine 96 traverse the membrane as a helical segment. The Cytoplasmic portion of the chain corresponds to leucine 97 to glutamine 119. Residues serine 112–tyrosine 321 form the TLC domain. Residues leucine 120–tyrosine 140 form a helical membrane-spanning segment. The Extracellular portion of the chain corresponds to leucine 141–glutamine 159. Residues valine 160 to phenylalanine 180 traverse the membrane as a helical segment. The Cytoplasmic portion of the chain corresponds to glutamine 181–glutamine 191. The chain crosses the membrane as a helical span at residues leucine 192 to asparagine 209. The Extracellular portion of the chain corresponds to leucine 210 to glycine 214. The chain crosses the membrane as a helical span at residues leucine 215 to tyrosine 235. Over phenylalanine 236 to alanine 250 the chain is Cytoplasmic. A helical transmembrane segment spans residues valine 251–leucine 271. Over alanine 272–asparagine 287 the chain is Extracellular. Residues threonine 288–tryptophan 308 form a helical membrane-spanning segment. At arginine 309–proline 370 the chain is on the cytoplasmic side. The disordered stretch occupies residues tyrosine 348–proline 370.

It belongs to the TRAM family. As to quaternary structure, interacts with SERCA2B and COL1A1.

It is found in the membrane. Necessary for collagen type I synthesis. May couple the activity of the ER Ca(2+) pump SERCA2B with the activity of the translocon. This coupling may increase the local Ca(2+) concentration at the site of collagen synthesis, and a high Ca(2+) concentration may be necessary for the function of molecular chaperones involved in collagen folding. Required for proper insertion of the first transmembrane helix N-terminus of TM4SF20 into the ER lumen, may act as a ceramide sensor for regulated alternative translocation (RAT). This chain is Translocating chain-associated membrane protein 2 (TRAM2), found in Homo sapiens (Human).